A 425-amino-acid polypeptide reads, in one-letter code: CinA-like protein (425 aa).

This sequence belongs to the CinA family.

The sequence is that of CinA-like protein from Trichodesmium erythraeum (strain IMS101).